The chain runs to 875 residues: Agglutinin-like protein 4 (875 aa).

A signal peptide spans 1–17 (MLLQFLLLSLCVSVATA). 4 disulfides stabilise this stretch: C73-C150, C96-C112, C205-C298, and C227-C256. ALS repeat units follow at residues 365–396 (TTITTSYVGVTTSYSTKTAPIGETATVIVDVP), 401–432 (TTVTSEWTGTITTTTTRTNPTDSIDTVVVQVP), 438–469 (VTTTEYWSQSYATTTTVTAPPGGTDSVIIREP), and 474–502 (VTTTEYWSQSYATTLTITAPPGGTNSVII). N-linked (GlcNAc...) asparagine glycosylation occurs at N542. Disordered regions lie at residues 546–580 (THLPSSSSKPVDIPSSDVVTSTNDNSLTSLTGSEN) and 619–837 (TTII…LSQQ). The segment covering 549 to 578 (PSSSSKPVDIPSSDVVTSTNDNSLTSLTGS) has biased composition (low complexity). The N-linked (GlcNAc...) asparagine glycan is linked to N626. The span at 627–641 (GSGKSKSGELSSTGS) shows a compositional bias: low complexity. Polar residues predominate over residues 674 to 715 (STETQTTNNVPGSPNIPATGTTDIRESTTVSHTVTGNGNTGV). Residues 722–746 (ALTTSTSLTGATNSATNPSHETGVN) are compositionally biased toward low complexity. Positions 755–764 (IVTPPSSATA) are enriched in polar residues. N789 and N811 each carry an N-linked (GlcNAc...) asparagine glycan. Composition is skewed to low complexity over residues 789 to 816 (NGSTATTNIQGGNNEPGNQPGTNTTGEP) and 827 to 837 (SISQPTTLSQQ). A lipid anchor (GPI-anchor amidated aspartate) is attached at D852. A propeptide spans 853–875 (GSGSIVQHSAWLYVLLTAISIFF) (removed in mature form).

Belongs to the ALS family. Post-translationally, N-glycosylated and O-glycosylated.

Its subcellular location is the cell membrane. It localises to the secreted. The protein resides in the cell wall. Its function is as follows. Cell surface adhesion protein which mediates both yeast-to-host tissue adherence and yeast aggregation. Plays an important role in the pathogenesis of C.albicans infections. The chain is Agglutinin-like protein 4 (ALS4) from Candida albicans (Yeast).